We begin with the raw amino-acid sequence, 1240 residues long: Ubiquitin carboxyl-terminal hydrolase 36 (1240 aa).

2 disordered regions span residues 37–56 and 100–144; these read AKTSNGGGDGSSTSGSSTDN and SNGG…GTSA. Low complexity-rich tracts occupy residues 47 to 56 and 101 to 132; these read SSTSGSSTDN and NGGAASNGNGNYNGSNKTNGKFGAGNGHDNNG. A USP domain is found at 202 to 512; the sequence is TGMLNVGNTC…NAYIMFYELD (311 aa). The active-site Nucleophile is cysteine 211. Histidine 471 functions as the Proton acceptor in the catalytic mechanism. The interval 637–705 is disordered; sequence ANKSSCNTLN…KMFEESSESV (69 aa). Residues 639-649 show a composition bias toward polar residues; that stretch reads KSSCNTLNNSK. The span at 650–662 shows a compositional bias: low complexity; it reads QHQPQQQQQQPQH. The segment covering 668–680 has biased composition (acidic residues); it reads SDEEEDSDDDNDN. A Phosphothreonine modification is found at threonine 715. 4 disordered regions span residues 723-818, 831-998, 1076-1163, and 1198-1240; these read YESA…KQKT, YKNK…GESL, DMSS…EYES, and RFAG…QQQS. Phosphoserine occurs at positions 725 and 727. Residues 733–744 show a composition bias toward low complexity; that stretch reads QQQQQQQTLQQQ. A compositionally biased stretch (acidic residues) spans 759-769; that stretch reads SDTDDDDDEEQ. The span at 794–815 shows a compositional bias: low complexity; the sequence is NSSSSKTKSASNASSANVNSSK. Residues 843 to 859 are compositionally biased toward acidic residues; that stretch reads DDDDDDDEDEDEDEDEA. A compositionally biased stretch (low complexity) spans 869–879; sequence TKSSSSSSSTS. A compositionally biased stretch (polar residues) spans 880-890; sequence LTNGWQQSQNG. Serine 895 carries the post-translational modification Phosphoserine. Threonine 898 carries the phosphothreonine modification. The residue at position 901 (serine 901) is a Phosphoserine. A compositionally biased stretch (acidic residues) spans 918-941; that stretch reads DEDDDENVDGVADADDDDDNDEVA. The span at 976–988 shows a compositional bias: polar residues; sequence LNGSSKSQQTTPR. Residues 1076 to 1103 show a composition bias toward low complexity; that stretch reads DMSSSSSSSSSTNSSSNSSSRSNGNSSN. A compositionally biased stretch (basic and acidic residues) spans 1111-1120; it reads AEAREQRKRD. The segment covering 1231 to 1240 has biased composition (low complexity); it reads QSSGQQQQQS.

The protein belongs to the peptidase C19 family. In terms of assembly, interacts with atms/PAF1, but not with CycT.

It localises to the nucleus. The protein resides in the nucleolus. It catalyses the reaction Thiol-dependent hydrolysis of ester, thioester, amide, peptide and isopeptide bonds formed by the C-terminal Gly of ubiquitin (a 76-residue protein attached to proteins as an intracellular targeting signal).. In terms of biological role, required for maintaining multiple types of adult stem cells, including male and female germline, epithelial follicle cell and intestinal stem cells. May function as a transcriptional repressor by continually deubiquiting histone H2B at the promoters of genes critical for cellular differentiation, thereby preventing histone H3 'Lys-4' trimethylation (H3K4). Controls selective autophagy activation by ubiquitinated proteins. The chain is Ubiquitin carboxyl-terminal hydrolase 36 (Usp36) from Drosophila grimshawi (Hawaiian fruit fly).